The sequence spans 386 residues: Galactokinase (386 aa).

Substrate is bound at residue 35–38 (EHTD). ATP-binding positions include Ser69 and 125–131 (GAGLSSS). The Mg(2+) site is built by Ser131 and Glu163. Catalysis depends on Asp175, which acts as the Proton acceptor. Tyr224 is a binding site for substrate.

The protein belongs to the GHMP kinase family. GalK subfamily.

The protein localises to the cytoplasm. The catalysed reaction is alpha-D-galactose + ATP = alpha-D-galactose 1-phosphate + ADP + H(+). It functions in the pathway carbohydrate metabolism; galactose metabolism. Its function is as follows. Catalyzes the transfer of the gamma-phosphate of ATP to D-galactose to form alpha-D-galactose-1-phosphate (Gal-1-P). This chain is Galactokinase, found in Vibrio parahaemolyticus serotype O3:K6 (strain RIMD 2210633).